Here is a 165-residue protein sequence, read N- to C-terminus: uncharacterized protein (165 aa).

Helical transmembrane passes span 30 to 50, 65 to 85, 86 to 106, 108 to 128, and 131 to 151; these read GWEL…AAGG, GMVW…VSGL, SAFW…VWQG, FWLL…FASG, and WTVT…SEYG.

This sequence to E.coli YcdZ.

It localises to the cell membrane. This is an uncharacterized protein from Escherichia coli (strain K12).